The sequence spans 211 residues: Regulator of G-protein signaling 2 (211 aa).

Residues 32–66 (KMKRTLLKDWKTRLSYFLQNSSAPGKPKTGKKSKQ) form a necessary for membrane association region. The necessary to inhibit protein synthesis stretch occupies residues 79–116 (LWAEAFDELLASKYGLAAFRAFLKSEFCEENIEFWLAC). The 117-residue stretch at 83 to 199 (AFDELLASKY…LESEFYQDLC (117 aa)) folds into the RGS domain.

Interacts with GNAQ. Does not interact with GNAI1 and GNAI3. Interacts with EIF2B5. Interacts with PRKG1 (isoform alpha). Phosphorylated by protein kinase C. Phosphorylation by PRKG1 leads to activation of RGS2 activity. As to expression, expressed in a wide variety of tissues.

Its subcellular location is the cell membrane. It localises to the cytoplasm. The protein localises to the nucleus. The protein resides in the nucleolus. Its function is as follows. Regulates G protein-coupled receptor signaling cascades. Inhibits signal transduction by increasing the GTPase activity of G protein alpha subunits, thereby driving them into their inactive GDP-bound form. It is involved in the negative regulation of the angiotensin-activated signaling pathway. Plays a role in the regulation of blood pressure in response to signaling via G protein-coupled receptors and GNAQ. Plays a role in regulating the constriction and relaxation of vascular smooth muscle. Binds EIF2B5 and blocks its activity, thereby inhibiting the translation of mRNA into protein. This chain is Regulator of G-protein signaling 2 (Rgs2), found in Mus musculus (Mouse).